Reading from the N-terminus, the 1396-residue chain is ATP-binding cassette transporter pdr1 (1396 aa).

The segment at 1 to 22 is disordered; sequence MSEQEKGKGDLDDPNSKNTKCP. The 248-residue stretch at 73-320 folds into the ABC transporter 1 domain; the sequence is LHPINIIFRT…FLDLGFIPAK (248 aa). An ABC transmembrane type-2 1 domain is found at 412-622; it reads LQVFATAKVT…GYESIMLNEF (211 aa). The next 6 membrane-spanning stretches (helical) occupy residues 431–451, 466–486, 512–532, 543–563, 572–592, and 680–700; these read YIAT…SLFY, VLSN…DIIF, LVEF…VYFL, FIFY…FRFI, IAAL…GAVM, and GIIL…ANFI. The region spanning 758–1001 is the ABC transporter 2 domain; the sequence is LCWRDLNFTV…LVNYFKRIHG (244 aa). An ATP-binding site is contributed by 794 to 801; that stretch reads GENKSGKS. The 216-residue stretch at 1071 to 1286 folds into the ABC transmembrane type-2 2 domain; the sequence is FQIYKISMRN…FLEGMIGGVL (216 aa). A run of 5 helical transmembrane segments spans residues 1095–1115, 1166–1186, 1208–1228, 1245–1265, and 1361–1381; these read VAFN…QGVG, FIIA…TLFF, FAWL…IGIA, FVFI…VGFW, and CIMI…YYII.

Belongs to the ABC transporter superfamily. ABCG family. PDR (TC 3.A.1.205) subfamily.

The protein resides in the endoplasmic reticulum membrane. The sequence is that of ATP-binding cassette transporter pdr1 (pdr1) from Schizosaccharomyces pombe (strain 972 / ATCC 24843) (Fission yeast).